A 582-amino-acid polypeptide reads, in one-letter code: Proline--tRNA ligase (582 aa).

It belongs to the class-II aminoacyl-tRNA synthetase family. ProS type 1 subfamily. Homodimer.

Its subcellular location is the cytoplasm. It carries out the reaction tRNA(Pro) + L-proline + ATP = L-prolyl-tRNA(Pro) + AMP + diphosphate. Its function is as follows. Catalyzes the attachment of proline to tRNA(Pro) in a two-step reaction: proline is first activated by ATP to form Pro-AMP and then transferred to the acceptor end of tRNA(Pro). As ProRS can inadvertently accommodate and process non-cognate amino acids such as alanine and cysteine, to avoid such errors it has two additional distinct editing activities against alanine. One activity is designated as 'pretransfer' editing and involves the tRNA(Pro)-independent hydrolysis of activated Ala-AMP. The other activity is designated 'posttransfer' editing and involves deacylation of mischarged Ala-tRNA(Pro). The misacylated Cys-tRNA(Pro) is not edited by ProRS. The protein is Proline--tRNA ligase of Mycobacterium tuberculosis (strain CDC 1551 / Oshkosh).